The chain runs to 185 residues: Elongation factor P (185 aa).

This sequence belongs to the elongation factor P family.

The protein resides in the cytoplasm. Its pathway is protein biosynthesis; polypeptide chain elongation. In terms of biological role, involved in peptide bond synthesis. Stimulates efficient translation and peptide-bond synthesis on native or reconstituted 70S ribosomes in vitro. Probably functions indirectly by altering the affinity of the ribosome for aminoacyl-tRNA, thus increasing their reactivity as acceptors for peptidyl transferase. In Burkholderia multivorans (strain ATCC 17616 / 249), this protein is Elongation factor P.